The chain runs to 404 residues: Cysteine desulfurase IscS (404 aa).

Pyridoxal 5'-phosphate contacts are provided by residues 75–76, N155, Q183, and 203–205; these read AT and SAH. K206 carries the post-translational modification N6-(pyridoxal phosphate)lysine. T243 is a binding site for pyridoxal 5'-phosphate. The Cysteine persulfide intermediate role is filled by C328. Residue C328 coordinates [2Fe-2S] cluster.

It belongs to the class-V pyridoxal-phosphate-dependent aminotransferase family. NifS/IscS subfamily. Homodimer. Forms a heterotetramer with IscU, interacts with other sulfur acceptors. The cofactor is pyridoxal 5'-phosphate.

The protein localises to the cytoplasm. It catalyses the reaction (sulfur carrier)-H + L-cysteine = (sulfur carrier)-SH + L-alanine. It participates in cofactor biosynthesis; iron-sulfur cluster biosynthesis. In terms of biological role, master enzyme that delivers sulfur to a number of partners involved in Fe-S cluster assembly, tRNA modification or cofactor biosynthesis. Catalyzes the removal of elemental sulfur atoms from cysteine to produce alanine. Functions as a sulfur delivery protein for Fe-S cluster synthesis onto IscU, an Fe-S scaffold assembly protein, as well as other S acceptor proteins. The sequence is that of Cysteine desulfurase IscS from Shewanella woodyi (strain ATCC 51908 / MS32).